The sequence spans 307 residues: Homoserine O-acetyltransferase (307 aa).

The active-site Acyl-thioester intermediate is Cys-142. Residues Lys-163 and Ser-192 each contribute to the substrate site. His-235 serves as the catalytic Proton acceptor. Glu-237 is a catalytic residue. Residue Arg-249 coordinates substrate.

This sequence belongs to the MetA family.

It localises to the cytoplasm. The catalysed reaction is L-homoserine + acetyl-CoA = O-acetyl-L-homoserine + CoA. It participates in amino-acid biosynthesis; L-methionine biosynthesis via de novo pathway; O-acetyl-L-homoserine from L-homoserine: step 1/1. Transfers an acetyl group from acetyl-CoA to L-homoserine, forming acetyl-L-homoserine. The sequence is that of Homoserine O-acetyltransferase from Rhizobium leguminosarum bv. trifolii (strain WSM2304).